A 91-amino-acid chain; its full sequence is DNA-directed RNA polymerase subunit omega (91 aa).

It belongs to the RNA polymerase subunit omega family. The RNAP catalytic core consists of 2 alpha, 1 beta, 1 beta' and 1 omega subunit. When a sigma factor is associated with the core the holoenzyme is formed, which can initiate transcription.

It catalyses the reaction RNA(n) + a ribonucleoside 5'-triphosphate = RNA(n+1) + diphosphate. Functionally, promotes RNA polymerase assembly. Latches the N- and C-terminal regions of the beta' subunit thereby facilitating its interaction with the beta and alpha subunits. This is DNA-directed RNA polymerase subunit omega from Psychromonas ingrahamii (strain DSM 17664 / CCUG 51855 / 37).